We begin with the raw amino-acid sequence, 63 residues long: Cytochrome c oxidase subunit 5C (63 aa).

The chain crosses the membrane as a helical span at residues 16–34 (VVKEIFIGLTLGLVAGGMW).

This sequence belongs to the cytochrome c oxidase subunit 5C family.

The protein resides in the mitochondrion inner membrane. In terms of biological role, this protein is one of the nuclear-coded polypeptide chains of cytochrome c oxidase, the terminal oxidase in mitochondrial electron transport. The polypeptide is Cytochrome c oxidase subunit 5C (COX5C) (Hordeum vulgare (Barley)).